A 227-amino-acid polypeptide reads, in one-letter code: Cytochrome c oxidase subunit 2 (227 aa).

Over 1 to 14 (MPYPLQLGFQDATS) the chain is Mitochondrial intermembrane. A helical transmembrane segment spans residues 15–45 (PIMEELLHFHDHTLMIVFLISSLVLYIITLM). The Mitochondrial matrix portion of the chain corresponds to 46–59 (LTTKLTHTSTMDAQ). A helical transmembrane segment spans residues 60 to 87 (EVETVWTILPAVILILIALPSLRILYMM). Residues 88-227 (DEINNPLLTI…HFEDWSTSML (140 aa)) lie on the Mitochondrial intermembrane side of the membrane. 6 residues coordinate Cu cation: His-161, Cys-196, Glu-198, Cys-200, His-204, and Met-207. Glu-198 serves as a coordination point for Mg(2+).

Belongs to the cytochrome c oxidase subunit 2 family. Component of the cytochrome c oxidase (complex IV, CIV), a multisubunit enzyme composed of 14 subunits. The complex is composed of a catalytic core of 3 subunits MT-CO1, MT-CO2 and MT-CO3, encoded in the mitochondrial DNA, and 11 supernumerary subunits COX4I, COX5A, COX5B, COX6A, COX6B, COX6C, COX7A, COX7B, COX7C, COX8 and NDUFA4, which are encoded in the nuclear genome. The complex exists as a monomer or a dimer and forms supercomplexes (SCs) in the inner mitochondrial membrane with NADH-ubiquinone oxidoreductase (complex I, CI) and ubiquinol-cytochrome c oxidoreductase (cytochrome b-c1 complex, complex III, CIII), resulting in different assemblies (supercomplex SCI(1)III(2)IV(1) and megacomplex MCI(2)III(2)IV(2)). Found in a complex with TMEM177, COA6, COX18, COX20, SCO1 and SCO2. Interacts with TMEM177 in a COX20-dependent manner. Interacts with COX20. Interacts with COX16. The cofactor is Cu cation.

The protein localises to the mitochondrion inner membrane. The catalysed reaction is 4 Fe(II)-[cytochrome c] + O2 + 8 H(+)(in) = 4 Fe(III)-[cytochrome c] + 2 H2O + 4 H(+)(out). Component of the cytochrome c oxidase, the last enzyme in the mitochondrial electron transport chain which drives oxidative phosphorylation. The respiratory chain contains 3 multisubunit complexes succinate dehydrogenase (complex II, CII), ubiquinol-cytochrome c oxidoreductase (cytochrome b-c1 complex, complex III, CIII) and cytochrome c oxidase (complex IV, CIV), that cooperate to transfer electrons derived from NADH and succinate to molecular oxygen, creating an electrochemical gradient over the inner membrane that drives transmembrane transport and the ATP synthase. Cytochrome c oxidase is the component of the respiratory chain that catalyzes the reduction of oxygen to water. Electrons originating from reduced cytochrome c in the intermembrane space (IMS) are transferred via the dinuclear copper A center (CU(A)) of subunit 2 and heme A of subunit 1 to the active site in subunit 1, a binuclear center (BNC) formed by heme A3 and copper B (CU(B)). The BNC reduces molecular oxygen to 2 water molecules using 4 electrons from cytochrome c in the IMS and 4 protons from the mitochondrial matrix. The chain is Cytochrome c oxidase subunit 2 (MT-CO2) from Dasypus novemcinctus (Nine-banded armadillo).